We begin with the raw amino-acid sequence, 317 residues long: MKLTESNRSPRTTNTTDLSGKVAVVTGAAAGLGRAEALGLARLGATVVVNDVASALDASDVVDEIGAAAADAGAKAVAVAGDISQRATADELLASAVGLGGLDIVVNNAGITRDRMLFNMSDEEWDAVIAVHLRGHFLLTRNAAAYWRDKAKDAEGGSVFGRLVNTSSEAGLVGPVGQANYAAAKAGITALTLSAARALGRYGVCANVICPRARTAMTADVFGAAPDVEAGQIDPLSPQHVVSLVQFLASPAAAEVNGQVFIVYGPQVTLVSPPHMERRFSADGTSWDPTELTATLRDYFAGRDPEQSFSATDLMRQ.

NAD(+) contacts are provided by leucine 32, aspartate 51, aspartate 82, isoleucine 83, asparagine 108, serine 168, tyrosine 181, lysine 185, and threonine 215. Active-site residues include serine 168, tyrosine 181, and lysine 185.

This sequence belongs to the short-chain dehydrogenases/reductases (SDR) family. As to quaternary structure, homodimer, with 1 active site on each face.

The catalysed reaction is (22S)-hydroxy-3-oxo-chol-4-ene-24-oyl-CoA + NAD(+) = 3,22-dioxochol-4-en-24-oyl-CoA + NADH + H(+). It functions in the pathway steroid metabolism; cholesterol degradation. A reversible dehydrogenase involved in cholesterol side-chain degradation. Catalyzes the oxidation of hydroxyl-cholesterol-CoA ester metabolic intermediate (22S)-HOCO-CoA (3-oxo-chol-4-ene-(22S)-hydroxy-24-oyl-CoA), the product of ChsH3, has no activity on (22R)-HOCO-CoA (the product of EchA19). Also acts on (3R)-hydroxyoctanoyl-CoA and 17-beta-hydroxyandrost-4-en-3-one, but not on 7-alpha-hydroxyandrost-4-en-3-one, uses NAD(+) but not NADP(+). This is Hydroxyacyl-CoA dehydrogenase ChsB1 from Mycobacterium tuberculosis (strain ATCC 25618 / H37Rv).